We begin with the raw amino-acid sequence, 3095 residues long: HD protein homolog (3095 aa).

Disordered stretches follow at residues 105–197 (PHQH…NGNA), 536–561 (QQQQ…TMSG), 1312–1371 (PPQQ…STVI), 1509–1547 (KSTS…TTPS), and 2005–2037 (KELT…KEEE). Positions 115-139 (STNLTDHLSQNSVTPSVPTTPNYQQ) are enriched in polar residues. 2 stretches are compositionally biased toward low complexity: residues 140–197 (SPST…NGNA) and 536–551 (QQQQ…QQQQ). Polar residues predominate over residues 552–561 (HNLTSSTMSG). Low complexity-rich tracts occupy residues 1315 to 1368 (QQQQ…LNNS), 1510 to 1547 (STSS…TTPS), and 2008 to 2018 (TNNNNNNNNNI).

It belongs to the huntingtin family.

It is found in the cytoplasm. The protein resides in the nucleus. Its function is as follows. May play a role in microtubule-mediated transport or vesicle function. This chain is HD protein homolog (htt), found in Dictyostelium discoideum (Social amoeba).